A 604-amino-acid chain; its full sequence is Lipid-A-disaccharide synthase (604 aa).

The segment at 1 to 220 is unknown; that stretch reads MIPSGLVYLL…YKEQRSTPYL (220 aa). The interval 221-604 is lipid-A-disaccharide synthase; the sequence is DTHCFLSAGE…KRIFDTLPAV (384 aa).

It in the C-terminal section; belongs to the LpxB family.

It catalyses the reaction a lipid X + a UDP-2-N,3-O-bis[(3R)-3-hydroxyacyl]-alpha-D-glucosamine = a lipid A disaccharide + UDP + H(+). It functions in the pathway bacterial outer membrane biogenesis; LPS lipid A biosynthesis. Its function is as follows. Condensation of UDP-2,3-diacylglucosamine and 2,3-diacylglucosamine-1-phosphate to form lipid A disaccharide, a precursor of lipid A, a phosphorylated glycolipid that anchors the lipopolysaccharide to the outer membrane of the cell. This Chlamydia pneumoniae (Chlamydophila pneumoniae) protein is Lipid-A-disaccharide synthase (lpxB).